The primary structure comprises 481 residues: tRNA:m(4)X modification enzyme TRM13 homolog (481 aa).

Residues Arg-56–Glu-83 form a CHHC U11-48K-type zinc finger. Residues Cys-59, His-65, His-75, and Cys-79 each contribute to the Zn(2+) site. Positions Ser-113–His-140 form a coiled coil. 2 disordered regions span residues Ala-296–Asp-319 and Leu-379–Leu-414. The segment covering Thr-385–Thr-407 has biased composition (basic and acidic residues).

The protein belongs to the methyltransferase TRM13 family.

The enzyme catalyses cytidine(4) in tRNA(Pro) + S-adenosyl-L-methionine = 2'-O-methylcytidine(4) in tRNA(Pro) + S-adenosyl-L-homocysteine + H(+). It catalyses the reaction cytidine(4) in tRNA(Gly)(GCC) + S-adenosyl-L-methionine = 2'-O-methylcytidine(4) in tRNA(Gly)(GCC) + S-adenosyl-L-homocysteine + H(+). The catalysed reaction is adenosine(4) in tRNA(His) + S-adenosyl-L-methionine = 2'-O-methyladenosine(4) in tRNA(His) + S-adenosyl-L-homocysteine + H(+). Its function is as follows. tRNA methylase which 2'-O-methylates cytidine(4) in tRNA(Pro) and tRNA(Gly)(GCC), and adenosine(4) in tRNA(His). The protein is tRNA:m(4)X modification enzyme TRM13 homolog (Trmt13) of Mus musculus (Mouse).